The following is a 320-amino-acid chain: 2-oxoglutarate-dependent dioxygenase thnC (320 aa).

Positions 174–278 (PLVQMKLIRY…HSCATFWHGD (105 aa)) constitute a Fe2OG dioxygenase domain. The Fe cation site is built by H199, D201, and H258. R268 is a binding site for 2-oxoglutarate.

Belongs to the iron/ascorbate-dependent oxidoreductase family. The cofactor is Fe(2+).

It carries out the reaction trihazone A + 2-oxoglutarate + O2 + H(+) = trihazone D + succinate + 2 CO2 + H2O. It participates in secondary metabolite biosynthesis. In terms of biological role, 2-oxoglutarate-dependent dioxygenase; part of the gene cluster that produces the tetronate natural products trihazones. ThnC catalyzes the oxidative decarboxylation of trihazone A to trihazone D. The C4 hydrogen is first abstracted by the iron-oxo species generated in ThnC to give a tertiary radical at C4. This is followed by decarboxylation and removal of the second electron by the FeIII-OH center to give trihazone D. The pathway begins with the formation of trihazone A by the hybrid PKS-NRPS synthetase thnA and the trans-enoyl reductase thnE. Trihazone A is further decarboxylated by the 2-oxoglutarate-dependent dioxygenase thnC to produce trihazone D. The function of the FAD-dependent monooxygenase thnD has still to be identified. In Trichoderma harzianum (Hypocrea lixii), this protein is 2-oxoglutarate-dependent dioxygenase thnC.